Reading from the N-terminus, the 586-residue chain is MSTQSNRNALVVAQLKGDFVAFLFVLWKALNLPVPTKCQIDMAKVLANGDNKKFILQAFRGIGKSFITCAFVVWTLWRDPQLKILIVSASKERADLNSIFIKNIIDLLPFLDELKPSPGQRDSVISFDVGPAKPDHSPSVKSVGITGQLTGSRADIIIADDVEIPSNSATQGAREKLWTLVQEFRALLKPLPTSRVIYLGTPQTEMTLYKELEDNRGYTTIIWPALYPRSREEDLYYGERLAPMLREEFNDGFEMLQGQPTDPVRFDMEDLRERELEYGKAGFTLQFMLNPNLSDAEKYPLRLRDAIVCGLDFEKAPMHYQWLPNRQNRNEELPNVGLKGDDIHSYHSCSQNTGQYQQRILVIDPSGRGKDETGYAVLFTLNGYIYLMEAGGFPDGYSDKTLESLAKKANEWKVQTVVFESNFGDGMFGKVFSPVLLKHHAAALEEIRARGMKELRICDTLEPVLSTHRLVIRDEVIREDYQTARDADGKHDVRYSLFYQLTRMAREKGAVAHDDRLDAFRLGVEFLRSTMELDAVKVEAEVLEAFLEEHMEHPIHSAGHVVTAMVDGMELYWEDDDVNGDRFINW.

The ATPase activity stretch occupies residues 1 to 229; sequence MSTQSNRNAL…TIIWPALYPR (229 aa). The Walker A motif signature appears at 58 to 65; that stretch reads AFRGIGKS. A Walker B motif motif is present at residues 156–161; it reads IIIADD. The interval 344–429 is nuclease activity; the sequence is HSYHSCSQNT…ESNFGDGMFG (86 aa). Positions 364, 420, and 518 each coordinate Mg(2+). Residues 571–586 form an involved in prohead binding region; the sequence is LYWEDDDVNGDRFINW.

This sequence belongs to the Teseptimavirus large terminase family. As to quaternary structure, homopentamer. Interacts with the terminase small subunit; the active complex is probably heterooligomeric. Interacts with the portal protein. Mg(2+) serves as cofactor.

Functionally, the terminase large subunit acts as an ATP driven molecular motor necessary for viral DNA translocation into empty capsids and as an endonuclease that cuts the viral genome at a unique and precise dsDNA sequence to initiate and to end a packaging reaction. The terminase lies at a unique vertex of the procapsid and is composed of two subunits, a small terminase subunit involved in viral DNA recognition (packaging sequence), and a large terminase subunit possessing endonucleolytic and ATPase activities. Both terminase subunits heterooligomerize and are docked on the portal protein to form the packaging machine. The terminase large subunit exhibits endonuclease activity and cleaves the viral genome concatemer. Once the DNA is packaged, the terminase detaches from the connector and gets replaced by the tail to finish maturation of the virion. This Escherichia coli (Bacteriophage T3) protein is Terminase, large subunit (19).